The sequence spans 132 residues: Small ribosomal subunit protein uS8 (132 aa).

Belongs to the universal ribosomal protein uS8 family. As to quaternary structure, part of the 30S ribosomal subunit. Contacts proteins S5 and S12.

Functionally, one of the primary rRNA binding proteins, it binds directly to 16S rRNA central domain where it helps coordinate assembly of the platform of the 30S subunit. This chain is Small ribosomal subunit protein uS8, found in Treponema pallidum (strain Nichols).